We begin with the raw amino-acid sequence, 380 residues long: Histidinol-phosphate aminotransferase (380 aa).

An N6-(pyridoxal phosphate)lysine modification is found at Lys235.

Belongs to the class-II pyridoxal-phosphate-dependent aminotransferase family. Histidinol-phosphate aminotransferase subfamily. Homodimer. Pyridoxal 5'-phosphate is required as a cofactor.

It carries out the reaction L-histidinol phosphate + 2-oxoglutarate = 3-(imidazol-4-yl)-2-oxopropyl phosphate + L-glutamate. The protein operates within amino-acid biosynthesis; L-histidine biosynthesis; L-histidine from 5-phospho-alpha-D-ribose 1-diphosphate: step 7/9. The sequence is that of Histidinol-phosphate aminotransferase from Rhodococcus jostii (strain RHA1).